The sequence spans 62 residues: Sperm protamine P1 (62 aa).

Residues 1–62 (MARYRHSRSR…RYSRRGRRRY (62 aa)) form a disordered region.

The protein belongs to the protamine P1 family. Testis.

It is found in the nucleus. It localises to the chromosome. In terms of biological role, protamines substitute for histones in the chromatin of sperm during the haploid phase of spermatogenesis. They compact sperm DNA into a highly condensed, stable and inactive complex. In Trichosurus vulpecula (Brush-tailed possum), this protein is Sperm protamine P1 (PRM1).